A 469-amino-acid chain; its full sequence is Sorting and assembly machinery component 50 homolog (469 aa).

Positions 1–20 (MGTVHARSLEPLPSSGPDFG) are disordered. The region spanning 45 to 125 (VVVQHVHFDG…LDVTFEVTEL (81 aa)) is the POTRA domain. Lys-255 carries the N6-methyllysine modification.

Belongs to the SAM50/omp85 family. As to quaternary structure, associates with the mitochondrial contact site and cristae organizing system (MICOS) complex, composed of at least MICOS10/MIC10, CHCHD3/MIC19, CHCHD6/MIC25, APOOL/MIC27, IMMT/MIC60, APOO/MIC23/MIC26 and QIL1/MIC13. This complex was also known under the names MINOS or MitOS complex. The MICOS complex associates with mitochondrial outer membrane proteins SAMM50, MTX1 and MTX2 (together described as components of the mitochondrial outer membrane sorting assembly machinery (SAM) complex) and DNAJC11, mitochondrial inner membrane protein TMEM11 and with HSPA9. The MICOS and SAM complexes together with DNAJC11 are part of a large protein complex spanning both membranes termed the mitochondrial intermembrane space bridging (MIB) complex. Interacts with CHCHD3/MIC19. Interacts with ARMC1. In terms of assembly, (Microbial infection) Interacts with parasite T.gondii RH strain MAF1b1; the interaction is probably indirect and results in the disruption of the MIB complex and the formation of SPOTs (structures positive for outer mitochondrial membrane (OMM)), a cellular response to OMM stress, which leads to the constitutive shedding of OMM vesicles.

The protein localises to the mitochondrion outer membrane. Its subcellular location is the cytoplasm. The protein resides in the mitochondrion. Functionally, plays a crucial role in the maintenance of the structure of mitochondrial cristae and the proper assembly of the mitochondrial respiratory chain complexes. Required for the assembly of TOMM40 into the TOM complex. The protein is Sorting and assembly machinery component 50 homolog (SAMM50) of Homo sapiens (Human).